Consider the following 143-residue polypeptide: Large ribosomal subunit protein uL15 (143 aa).

Residues 1-59 (MELNTITPGQGAKHAKRRVGRGIGSGLGKTAGRGHKGQKSRSGGYHKVGFEGGQMPMQR) form a disordered region. Positions 21-31 (RGIGSGLGKTA) are enriched in gly residues.

Belongs to the universal ribosomal protein uL15 family. Part of the 50S ribosomal subunit.

In terms of biological role, binds to the 23S rRNA. The sequence is that of Large ribosomal subunit protein uL15 from Polaromonas naphthalenivorans (strain CJ2).